We begin with the raw amino-acid sequence, 107 residues long: Large ribosomal subunit protein uL24 (107 aa).

This sequence belongs to the universal ribosomal protein uL24 family. Part of the 50S ribosomal subunit.

In terms of biological role, one of two assembly initiator proteins, it binds directly to the 5'-end of the 23S rRNA, where it nucleates assembly of the 50S subunit. One of the proteins that surrounds the polypeptide exit tunnel on the outside of the subunit. This is Large ribosomal subunit protein uL24 from Natranaerobius thermophilus (strain ATCC BAA-1301 / DSM 18059 / JW/NM-WN-LF).